Here is a 345-residue protein sequence, read N- to C-terminus: Holliday junction branch migration complex subunit RuvB (345 aa).

The interval 4–194 is large ATPase domain (RuvB-L); it reads TDKLFGAAPE…FGIVARLEFY (191 aa). Residues L33, R34, G75, K78, T79, T80, 141-143, R184, Y194, and R231 contribute to the ATP site; that span reads EDY. T79 contacts Mg(2+). Residues 195 to 265 form a small ATPAse domain (RuvB-S) region; it reads NAEELTRIVS…VADAALAMLD (71 aa). The interval 268–345 is head domain (RuvB-H); that stretch reads PAGLDVMDRK…LHFGLPVKDA (78 aa). Residues R323 and R328 each contribute to the DNA site.

Belongs to the RuvB family. As to quaternary structure, homohexamer. Forms an RuvA(8)-RuvB(12)-Holliday junction (HJ) complex. HJ DNA is sandwiched between 2 RuvA tetramers; dsDNA enters through RuvA and exits via RuvB. An RuvB hexamer assembles on each DNA strand where it exits the tetramer. Each RuvB hexamer is contacted by two RuvA subunits (via domain III) on 2 adjacent RuvB subunits; this complex drives branch migration. In the full resolvosome a probable DNA-RuvA(4)-RuvB(12)-RuvC(2) complex forms which resolves the HJ.

The protein resides in the cytoplasm. It catalyses the reaction ATP + H2O = ADP + phosphate + H(+). Its function is as follows. The RuvA-RuvB-RuvC complex processes Holliday junction (HJ) DNA during genetic recombination and DNA repair, while the RuvA-RuvB complex plays an important role in the rescue of blocked DNA replication forks via replication fork reversal (RFR). RuvA specifically binds to HJ cruciform DNA, conferring on it an open structure. The RuvB hexamer acts as an ATP-dependent pump, pulling dsDNA into and through the RuvAB complex. RuvB forms 2 homohexamers on either side of HJ DNA bound by 1 or 2 RuvA tetramers; 4 subunits per hexamer contact DNA at a time. Coordinated motions by a converter formed by DNA-disengaged RuvB subunits stimulates ATP hydrolysis and nucleotide exchange. Immobilization of the converter enables RuvB to convert the ATP-contained energy into a lever motion, pulling 2 nucleotides of DNA out of the RuvA tetramer per ATP hydrolyzed, thus driving DNA branch migration. The RuvB motors rotate together with the DNA substrate, which together with the progressing nucleotide cycle form the mechanistic basis for DNA recombination by continuous HJ branch migration. Branch migration allows RuvC to scan DNA until it finds its consensus sequence, where it cleaves and resolves cruciform DNA. The sequence is that of Holliday junction branch migration complex subunit RuvB from Chromobacterium violaceum (strain ATCC 12472 / DSM 30191 / JCM 1249 / CCUG 213 / NBRC 12614 / NCIMB 9131 / NCTC 9757 / MK).